The following is a 211-amino-acid chain: Transcription factor E (211 aa).

The 121-residue stretch at 10–130 (GNPAIYQYLL…LWLMRMDHMN (121 aa)) folds into the HTH TFE/IIEalpha-type domain.

The protein belongs to the TFE family. As to quaternary structure, monomer. Interaction with RNA polymerase subunits RpoF and RpoE is necessary for Tfe stimulatory transcription activity. Able to interact with Tbp and RNA polymerase in the absence of DNA promoter. Interacts both with the preinitiation and elongation complexes.

Its function is as follows. Transcription factor that plays a role in the activation of archaeal genes transcribed by RNA polymerase. Facilitates transcription initiation by enhancing TATA-box recognition by TATA-box-binding protein (Tbp), and transcription factor B (Tfb) and RNA polymerase recruitment. Not absolutely required for transcription in vitro, but particularly important in cases where Tbp or Tfb function is not optimal. It dynamically alters the nucleic acid-binding properties of RNA polymerases by stabilizing the initiation complex and destabilizing elongation complexes. Seems to translocate with the RNA polymerase following initiation and acts by binding to the non template strand of the transcription bubble in elongation complexes. This Methanocorpusculum labreanum (strain ATCC 43576 / DSM 4855 / Z) protein is Transcription factor E.